The chain runs to 260 residues: E3 ubiquitin-protein ligase SRFP1 (260 aa).

Residues 11–80 form a CHY-type zinc finger; it reads FGRMGFGCKH…VAQVCYNCGV (70 aa). The Zn(2+) site is built by cysteine 18, histidine 20, cysteine 31, cysteine 32, cysteine 38, cysteine 41, histidine 42, histidine 50, cysteine 62, cysteine 65, cysteine 75, cysteine 78, cysteine 87, cysteine 90, histidine 103, cysteine 104, cysteine 107, cysteine 110, histidine 120, cysteine 121, cysteine 124, cysteine 127, histidine 136, and cysteine 138. The CTCHY-type zinc finger occupies 82 to 146; sequence MGEYFCSACK…CCIENSMKNN (65 aa). The RING-type; atypical zinc finger occupies 147–190; sequence CPICYEYLFDSLRETSVLRCGHTMHLQCFHEMLKHDKFSCPICS.

As to expression, expressed in roots, leaves, nodes and panicles.

It localises to the nucleus. The protein resides in the cytoplasm. It carries out the reaction S-ubiquitinyl-[E2 ubiquitin-conjugating enzyme]-L-cysteine + [acceptor protein]-L-lysine = [E2 ubiquitin-conjugating enzyme]-L-cysteine + N(6)-ubiquitinyl-[acceptor protein]-L-lysine.. It participates in protein modification; protein ubiquitination. In terms of biological role, possesses E3 ubiquitin-protein ligase activity in vitro. Possesses transactivation activity in yeast cells. May modulate abiotic stress responses by negatively regulating antioxidant enzymes-mediated reactive oxygen species (ROS) removal. The sequence is that of E3 ubiquitin-protein ligase SRFP1 from Oryza sativa subsp. japonica (Rice).